The sequence spans 383 residues: Succinate--CoA ligase [ADP-forming] subunit beta (383 aa).

The ATP-grasp domain maps to 9–236 (KELLGRFGLR…VEAADPQEHR (228 aa)). ATP-binding positions include K45, 52–54 (GRG), E91, A94, and E99. Mg(2+)-binding residues include N191 and D205. Substrate contacts are provided by residues N256 and 313 to 315 (GIT).

Belongs to the succinate/malate CoA ligase beta subunit family. In terms of assembly, heterotetramer of two alpha and two beta subunits. It depends on Mg(2+) as a cofactor.

The enzyme catalyses succinate + ATP + CoA = succinyl-CoA + ADP + phosphate. It catalyses the reaction GTP + succinate + CoA = succinyl-CoA + GDP + phosphate. Its pathway is carbohydrate metabolism; tricarboxylic acid cycle; succinate from succinyl-CoA (ligase route): step 1/1. Succinyl-CoA synthetase functions in the citric acid cycle (TCA), coupling the hydrolysis of succinyl-CoA to the synthesis of either ATP or GTP and thus represents the only step of substrate-level phosphorylation in the TCA. The beta subunit provides nucleotide specificity of the enzyme and binds the substrate succinate, while the binding sites for coenzyme A and phosphate are found in the alpha subunit. This chain is Succinate--CoA ligase [ADP-forming] subunit beta, found in Rubrobacter xylanophilus (strain DSM 9941 / JCM 11954 / NBRC 16129 / PRD-1).